Consider the following 341-residue polypeptide: DNA-directed RNA polymerase subunit alpha (341 aa).

The tract at residues 1-233 is alpha N-terminal domain (alpha-NTD); it reads MIQDEVPVSA…DLFLPFLHTE (233 aa). Positions 262–341 are alpha C-terminal domain (alpha-CTD); it reads DRMAKEVAFK…NLPRNKFSID (80 aa).

The protein belongs to the RNA polymerase alpha chain family. As to quaternary structure, in plastids the minimal PEP RNA polymerase catalytic core is composed of four subunits: alpha, beta, beta', and beta''. When a (nuclear-encoded) sigma factor is associated with the core the holoenzyme is formed, which can initiate transcription.

Its subcellular location is the plastid. The protein localises to the chloroplast. It carries out the reaction RNA(n) + a ribonucleoside 5'-triphosphate = RNA(n+1) + diphosphate. In terms of biological role, DNA-dependent RNA polymerase catalyzes the transcription of DNA into RNA using the four ribonucleoside triphosphates as substrates. The polypeptide is DNA-directed RNA polymerase subunit alpha (Angiopteris evecta (Mule's foot fern)).